A 1491-amino-acid chain; its full sequence is Chromosome partition protein MukB (1491 aa).

Residue 34 to 41 participates in ATP binding; that stretch reads GGNGAGKS. 6 coiled-coil regions span residues 302 to 418, 488 to 600, 638 to 666, 781 to 806, 836 to 1109, and 1210 to 1239; these read LIEQ…QYQQ, EVAR…RFES, ELEK…RLAS, RAAR…AKAS, EQAL…DLRT, and VEAI…ISSD. A flexible hinge region spans residues 667-784; it reads PGGSNDPRLK…AIPLFGRAAR (118 aa). The interval 1059 to 1080 is disordered; sequence QRRRDELQERLHTSRSRKSEYE.

This sequence belongs to the SMC family. MukB subfamily. Homodimerization via its hinge domain. Binds to DNA via its C-terminal region. Interacts, and probably forms a ternary complex, with MukE and MukF via its C-terminal region. The complex formation is stimulated by calcium or magnesium. Interacts with tubulin-related protein FtsZ.

The protein resides in the cytoplasm. It is found in the nucleoid. Plays a central role in chromosome condensation, segregation and cell cycle progression. Functions as a homodimer, which is essential for chromosome partition. Involved in negative DNA supercoiling in vivo, and by this means organize and compact chromosomes. May achieve or facilitate chromosome segregation by condensation DNA from both sides of a centrally located replisome during cell division. The protein is Chromosome partition protein MukB of Vibrio cholerae serotype O1 (strain ATCC 39541 / Classical Ogawa 395 / O395).